A 184-amino-acid chain; its full sequence is GTP cyclohydrolase 1 (184 aa).

Positions 75, 78, and 146 each coordinate Zn(2+).

It belongs to the GTP cyclohydrolase I family. As to quaternary structure, homomer.

It carries out the reaction GTP + H2O = 7,8-dihydroneopterin 3'-triphosphate + formate + H(+). The protein operates within cofactor biosynthesis; 7,8-dihydroneopterin triphosphate biosynthesis; 7,8-dihydroneopterin triphosphate from GTP: step 1/1. In Streptococcus pneumoniae (strain Hungary19A-6), this protein is GTP cyclohydrolase 1.